A 355-amino-acid chain; its full sequence is Putative early 40.3 kDa protein (355 aa).

Its function is as follows. This protein is required for viral late gene expression. The protein is Putative early 40.3 kDa protein (DA41) of Orgyia pseudotsugata multicapsid polyhedrosis virus (OpMNPV).